Here is a 223-residue protein sequence, read N- to C-terminus: Phosphoribosylformylglycinamidine synthase subunit PurQ (223 aa).

One can recognise a Glutamine amidotransferase type-1 domain in the interval 4–223; the sequence is FAVIVFPGTN…FKSIVEWMKK (220 aa). Cysteine 85 functions as the Nucleophile in the catalytic mechanism. Active-site residues include histidine 196 and glutamate 198.

As to quaternary structure, part of the FGAM synthase complex composed of 1 PurL, 1 PurQ and 2 PurS subunits.

The protein localises to the cytoplasm. The enzyme catalyses N(2)-formyl-N(1)-(5-phospho-beta-D-ribosyl)glycinamide + L-glutamine + ATP + H2O = 2-formamido-N(1)-(5-O-phospho-beta-D-ribosyl)acetamidine + L-glutamate + ADP + phosphate + H(+). It catalyses the reaction L-glutamine + H2O = L-glutamate + NH4(+). Its pathway is purine metabolism; IMP biosynthesis via de novo pathway; 5-amino-1-(5-phospho-D-ribosyl)imidazole from N(2)-formyl-N(1)-(5-phospho-D-ribosyl)glycinamide: step 1/2. Its function is as follows. Part of the phosphoribosylformylglycinamidine synthase complex involved in the purines biosynthetic pathway. Catalyzes the ATP-dependent conversion of formylglycinamide ribonucleotide (FGAR) and glutamine to yield formylglycinamidine ribonucleotide (FGAM) and glutamate. The FGAM synthase complex is composed of three subunits. PurQ produces an ammonia molecule by converting glutamine to glutamate. PurL transfers the ammonia molecule to FGAR to form FGAM in an ATP-dependent manner. PurS interacts with PurQ and PurL and is thought to assist in the transfer of the ammonia molecule from PurQ to PurL. This Pyrococcus horikoshii (strain ATCC 700860 / DSM 12428 / JCM 9974 / NBRC 100139 / OT-3) protein is Phosphoribosylformylglycinamidine synthase subunit PurQ.